The sequence spans 133 residues: Cell division protein FtsL (133 aa).

Residues 1–45 (MAVEKVYQPYDEQVYNSIPKQQPQTKPEKKTVSRKVVVQLTKFEK) lie on the Cytoplasmic side of the membrane. A helical transmembrane segment spans residues 46–65 (VLYITLITVIAMLSIYMLSL). Topologically, residues 66 to 133 (KMDAYDTRGK…VVRSNGEAKN (68 aa)) are extracellular.

This sequence belongs to the FtsL family.

It localises to the cell membrane. Functionally, essential cell division protein. The sequence is that of Cell division protein FtsL from Staphylococcus aureus (strain NCTC 8325 / PS 47).